A 282-amino-acid chain; its full sequence is MDDHVEHNYNTSLEEVHFKSLSDCLQSSLVMDYNSLEKVFKFSPYSSPFQSVSPSVNNPYLNLTSNSPVVSSSSNEGEPKENTNDKSDQMEDNEGDLHGVGESSKQLTKQGKKKGEKKEREVRVAFMTKSEIDHLEDGYRWRKYGQKAVKNSPYPRSYYRCTTQKCNVKKRVERSFQDPSIVITTYEGKHNHPIPSTLRGTVAAEHLLVHRGGGGSLLHSFPRHHQDFLMMKHSPANYQSVGSLSYEHGHGTSSYNFNNNQPVVDYGLLQDIVPSMFSKNES.

The interval 63–121 is disordered; it reads LTSNSPVVSSSSNEGEPKENTNDKSDQMEDNEGDLHGVGESSKQLTKQGKKKGEKKERE. Over residues 65–75 the composition is skewed to low complexity; it reads SNSPVVSSSSN. A compositionally biased stretch (basic and acidic residues) spans 77–99; the sequence is GEPKENTNDKSDQMEDNEGDLHG. The segment at residues 130–195 is a DNA-binding region (WRKY); it reads SEIDHLEDGY…YEGKHNHPIP (66 aa).

The protein belongs to the WRKY group II-c family.

Its subcellular location is the nucleus. Functionally, transcription factor. Interacts specifically with the W box (5'-(T)TGAC[CT]-3'), a frequently occurring elicitor-responsive cis-acting element. This Arabidopsis thaliana (Mouse-ear cress) protein is WRKY transcription factor 71 (WRKY71).